Consider the following 116-residue polypeptide: NADH-ubiquinone oxidoreductase chain 3 (116 aa).

The next 3 helical transmembrane spans lie at 3–23, 56–76, and 85–105; these read LITTIIAITITLSAVLATVSF, FFLIAILFLLFDLEIALLLPL, and PALTLAWSAAVLALLTLGLIY.

It belongs to the complex I subunit 3 family.

The protein localises to the mitochondrion membrane. The catalysed reaction is a ubiquinone + NADH + 5 H(+)(in) = a ubiquinol + NAD(+) + 4 H(+)(out). Core subunit of the mitochondrial membrane respiratory chain NADH dehydrogenase (Complex I) that is believed to belong to the minimal assembly required for catalysis. Complex I functions in the transfer of electrons from NADH to the respiratory chain. The immediate electron acceptor for the enzyme is believed to be ubiquinone. The polypeptide is NADH-ubiquinone oxidoreductase chain 3 (MT-ND3) (Salmo trutta (Brown trout)).